Consider the following 79-residue polypeptide: RNA-binding protein Hfq (79 aa).

Positions 10–69 constitute a Sm domain; it reads DPFLNALRKEHVPVSIYLVNGIKLQGNIESFDQYVVLLRNTVTQMVYKHAISTVVPARPV.

Belongs to the Hfq family. Homohexamer.

Functionally, RNA chaperone that binds small regulatory RNA (sRNAs) and mRNAs to facilitate mRNA translational regulation in response to envelope stress, environmental stress and changes in metabolite concentrations. Also binds with high specificity to tRNAs. The polypeptide is RNA-binding protein Hfq (Burkholderia mallei (strain ATCC 23344)).